A 399-amino-acid polypeptide reads, in one-letter code: Putative glutamate--cysteine ligase 2 (399 aa).

Positions 377-399 are disordered; the sequence is PAVGSSHGRTDPSRNGGPSHAGA.

Belongs to the glutamate--cysteine ligase type 2 family. YbdK subfamily.

The catalysed reaction is L-cysteine + L-glutamate + ATP = gamma-L-glutamyl-L-cysteine + ADP + phosphate + H(+). ATP-dependent carboxylate-amine ligase which exhibits weak glutamate--cysteine ligase activity. This Thermobifida fusca (strain YX) protein is Putative glutamate--cysteine ligase 2.